Here is a 272-residue protein sequence, read N- to C-terminus: Testis-specific gene 13 protein (272 aa).

The protein is Testis-specific gene 13 protein (TSGA13) of Bos taurus (Bovine).